Here is a 270-residue protein sequence, read N- to C-terminus: Undecaprenyl-diphosphatase (270 aa).

The next 7 membrane-spanning stretches (helical) occupy residues methionine 1–valine 21, phenylalanine 92–phenylalanine 112, alanine 119–leucine 139, leucine 150–isoleucine 170, phenylalanine 193–leucine 213, leucine 223–valine 243, and glycine 250–leucine 270.

It belongs to the UppP family.

Its subcellular location is the cell inner membrane. The catalysed reaction is di-trans,octa-cis-undecaprenyl diphosphate + H2O = di-trans,octa-cis-undecaprenyl phosphate + phosphate + H(+). Its function is as follows. Catalyzes the dephosphorylation of undecaprenyl diphosphate (UPP). Confers resistance to bacitracin. This is Undecaprenyl-diphosphatase from Salinibacter ruber (strain DSM 13855 / M31).